The sequence spans 180 residues: Ribulose bisphosphate carboxylase small subunit, chloroplastic 2 (180 aa).

Residues 1–54 (MASMMSNAAVVGRTTPAQASMVAPFTGLKSVSAFPVTKKSNDITSIASNGGRVQ) constitute a chloroplast transit peptide.

Belongs to the RuBisCO small chain family. As to quaternary structure, heterohexadecamer of 8 large and 8 small subunits.

It localises to the plastid. The protein localises to the chloroplast. Its function is as follows. RuBisCO catalyzes two reactions: the carboxylation of D-ribulose 1,5-bisphosphate, the primary event in carbon dioxide fixation, as well as the oxidative fragmentation of the pentose substrate. Both reactions occur simultaneously and in competition at the same active site. Although the small subunit is not catalytic it is essential for maximal activity. This Mesembryanthemum crystallinum (Common ice plant) protein is Ribulose bisphosphate carboxylase small subunit, chloroplastic 2.